Reading from the N-terminus, the 127-residue chain is MMRQSVQTVLPESTGNNTLSLRDSVCRDLFQLFSSPHSPLPILLVSGMPEWQGHNQSDKLLQSWYCRQLRSALLFHEPRIAALQVNLKEAYCHELAISLEMMLYHDDEPLTFDLVWQKGNWHRTMPQ.

Belongs to the GpW/Gp25 family. IraD subfamily. Interacts with RssB.

Its subcellular location is the cytoplasm. Inhibits RpoS proteolysis by regulating RssB activity, thereby increasing the stability of the sigma stress factor RpoS during oxidative stress. Its effect on RpoS stability is due to its interaction with RssB, which probably blocks the interaction of RssB with RpoS, and the consequent delivery of the RssB-RpoS complex to the ClpXP protein degradation pathway. In Escherichia coli (strain UTI89 / UPEC), this protein is Anti-adapter protein IraD.